A 314-amino-acid polypeptide reads, in one-letter code: Nodulation protein D 2 (314 aa).

Residues 6–63 form the HTH lysR-type domain; sequence LDLNLLVVLDALMTERNLTAAARSINLSQPAMSAAVARLRTNFRDDLFAMAGREFIPT. A DNA-binding region (H-T-H motif) is located at residues 23–42; that stretch reads LTAAARSINLSQPAMSAAVA.

It belongs to the LysR transcriptional regulatory family.

Its function is as follows. NodD regulates the expression of the nodABCFE genes which encode other nodulation proteins. NodD is also a negative regulator of its own expression. Binds flavonoids as inducers. The protein is Nodulation protein D 2 (nodD2) of Rhizobium tropici.